Consider the following 363-residue polypeptide: Probable dual-specificity RNA methyltransferase RlmN (363 aa).

Glu106 serves as the catalytic Proton acceptor. In terms of domain architecture, Radical SAM core spans 112-345 (HEYGNSVCVT…VTIRREQGHD (234 aa)). A disulfide bridge connects residues Cys119 and Cys350. Residues Cys126, Cys130, and Cys133 each coordinate [4Fe-4S] cluster. S-adenosyl-L-methionine contacts are provided by residues 176–177 (GE), Ser208, 231–233 (SLH), and Asn307. Cys350 (S-methylcysteine intermediate) is an active-site residue.

This sequence belongs to the radical SAM superfamily. RlmN family. Requires [4Fe-4S] cluster as cofactor.

It localises to the cytoplasm. It carries out the reaction adenosine(2503) in 23S rRNA + 2 reduced [2Fe-2S]-[ferredoxin] + 2 S-adenosyl-L-methionine = 2-methyladenosine(2503) in 23S rRNA + 5'-deoxyadenosine + L-methionine + 2 oxidized [2Fe-2S]-[ferredoxin] + S-adenosyl-L-homocysteine. The catalysed reaction is adenosine(37) in tRNA + 2 reduced [2Fe-2S]-[ferredoxin] + 2 S-adenosyl-L-methionine = 2-methyladenosine(37) in tRNA + 5'-deoxyadenosine + L-methionine + 2 oxidized [2Fe-2S]-[ferredoxin] + S-adenosyl-L-homocysteine. Specifically methylates position 2 of adenine 2503 in 23S rRNA and position 2 of adenine 37 in tRNAs. This chain is Probable dual-specificity RNA methyltransferase RlmN, found in Bacillus velezensis (strain DSM 23117 / BGSC 10A6 / LMG 26770 / FZB42) (Bacillus amyloliquefaciens subsp. plantarum).